Here is a 216-residue protein sequence, read N- to C-terminus: 2-phospho-L-lactate guanylyltransferase (216 aa).

Belongs to the CofC family. In terms of assembly, homodimer.

The enzyme catalyses (2S)-2-phospholactate + GTP + H(+) = (2S)-lactyl-2-diphospho-5'-guanosine + diphosphate. It participates in cofactor biosynthesis; coenzyme F420 biosynthesis. Its function is as follows. Guanylyltransferase that catalyzes the activation of (2S)-2-phospholactate (2-PL) as (2S)-lactyl-2-diphospho-5'-guanosine, via the condensation of 2-PL with GTP. It is involved in the biosynthesis of coenzyme F420, a hydride carrier cofactor. The sequence is that of 2-phospho-L-lactate guanylyltransferase from Methanocaldococcus infernus (strain DSM 11812 / JCM 15783 / ME).